A 407-amino-acid chain; its full sequence is Phosphopentomutase (407 aa).

6 residues coordinate Mn(2+): D10, D306, H311, D347, H348, and H359.

Belongs to the phosphopentomutase family. Requires Mn(2+) as cofactor.

Its subcellular location is the cytoplasm. The catalysed reaction is 2-deoxy-alpha-D-ribose 1-phosphate = 2-deoxy-D-ribose 5-phosphate. The enzyme catalyses alpha-D-ribose 1-phosphate = D-ribose 5-phosphate. It functions in the pathway carbohydrate degradation; 2-deoxy-D-ribose 1-phosphate degradation; D-glyceraldehyde 3-phosphate and acetaldehyde from 2-deoxy-alpha-D-ribose 1-phosphate: step 1/2. Isomerase that catalyzes the conversion of deoxy-ribose 1-phosphate (dRib-1-P) and ribose 1-phosphate (Rib-1-P) to deoxy-ribose 5-phosphate (dRib-5-P) and ribose 5-phosphate (Rib-5-P), respectively. The sequence is that of Phosphopentomutase from Yersinia pseudotuberculosis serotype O:1b (strain IP 31758).